The chain runs to 54 residues: Large ribosomal subunit protein bL33 (54 aa).

The protein belongs to the bacterial ribosomal protein bL33 family.

This Stenotrophomonas maltophilia (strain R551-3) protein is Large ribosomal subunit protein bL33.